Here is a 446-residue protein sequence, read N- to C-terminus: Na(+)-translocating NADH-quinone reductase subunit A (446 aa).

The protein belongs to the NqrA family. Composed of six subunits; NqrA, NqrB, NqrC, NqrD, NqrE and NqrF.

The enzyme catalyses a ubiquinone + n Na(+)(in) + NADH + H(+) = a ubiquinol + n Na(+)(out) + NAD(+). In terms of biological role, NQR complex catalyzes the reduction of ubiquinone-1 to ubiquinol by two successive reactions, coupled with the transport of Na(+) ions from the cytoplasm to the periplasm. NqrA to NqrE are probably involved in the second step, the conversion of ubisemiquinone to ubiquinol. In Vibrio vulnificus (strain CMCP6), this protein is Na(+)-translocating NADH-quinone reductase subunit A.